Reading from the N-terminus, the 511-residue chain is MASDSSFPGASSNVAEYSVSEISGALKRTVEDMFGHVRVRGEISGYRGPHSSGHAYFALKDDRARLEAVIWRGSMSRLRFRPEEGMEVIATGKLTTYPGSSKYQIVIEQMEPAGAGALMALLEERKQRLAAEGLFDPALKQLLPFMPRVIGVVTSPTGAVIRDIIHRISDRYPLRVIVWPVRVQGDTCGPEVATAVNGFNTLPDDGPIPRPDVLIVARGGGSLEDLWGFNDEIVVRAVAASHIPVISAVGHETDWTLIDLAADMRAPTPTGAAEMAVPVKADLQASLASQSARLSSAMSRFFDQKRQAHRAAARAMPSADQLLALPRRRFDEAASRLTRALFVNTQKKRVHFDGHARQLSPRLLQRRLVELERGVTMLGQRLPRALEAFLRERRTAFTHRANRLSPEPILRRTRLTGSTLEQLDRRRDQAVRLLIERVKRRSQELDRLMRTLSYESVLERGFAVVFDAQGKPVKQAAAVSPDDALSVRFRDGDVGVVARAGLTIPDPTKGQ.

Belongs to the XseA family. In terms of assembly, heterooligomer composed of large and small subunits.

Its subcellular location is the cytoplasm. The catalysed reaction is Exonucleolytic cleavage in either 5'- to 3'- or 3'- to 5'-direction to yield nucleoside 5'-phosphates.. Its function is as follows. Bidirectionally degrades single-stranded DNA into large acid-insoluble oligonucleotides, which are then degraded further into small acid-soluble oligonucleotides. The protein is Exodeoxyribonuclease 7 large subunit of Brucella ovis (strain ATCC 25840 / 63/290 / NCTC 10512).